Here is a 144-residue protein sequence, read N- to C-terminus: Large ribosomal subunit protein uL15 (144 aa).

The interval 1–54 (MRLNTLSPAAGAKHAPKRVGRGMGSGLGKTAGRGHKGQKSRSGGGVRPGFEGGQ) is disordered. 2 stretches are compositionally biased toward gly residues: residues 21–31 (RGMGSGLGKTA) and 42–52 (SGGGVRPGFEG).

It belongs to the universal ribosomal protein uL15 family. Part of the 50S ribosomal subunit.

Its function is as follows. Binds to the 23S rRNA. The chain is Large ribosomal subunit protein uL15 from Shewanella oneidensis (strain ATCC 700550 / JCM 31522 / CIP 106686 / LMG 19005 / NCIMB 14063 / MR-1).